The chain runs to 352 residues: Protein RecA (352 aa).

67-74 (GPESSGKT) contributes to the ATP binding site. Residues 332–352 (VKPADAESKEDSPKLKAVDGF) form a disordered region. Residues 335–352 (ADAESKEDSPKLKAVDGF) show a composition bias toward basic and acidic residues.

Belongs to the RecA family.

It localises to the cytoplasm. Can catalyze the hydrolysis of ATP in the presence of single-stranded DNA, the ATP-dependent uptake of single-stranded DNA by duplex DNA, and the ATP-dependent hybridization of homologous single-stranded DNAs. It interacts with LexA causing its activation and leading to its autocatalytic cleavage. The polypeptide is Protein RecA (Pseudarthrobacter chlorophenolicus (strain ATCC 700700 / DSM 12829 / CIP 107037 / JCM 12360 / KCTC 9906 / NCIMB 13794 / A6) (Arthrobacter chlorophenolicus)).